Reading from the N-terminus, the 116-residue chain is Cysteine proteinase inhibitor 1 (116 aa).

A signal peptide spans 1–26 (MVPKPLSLLLFLLLALSAAVVGGRKL). Residues 30-89 (GGWRPIESLNSAEVQDVAQFAVSEHNKQANDELQYQSVVRGYTQVVAGTNYRLVIAAKDG) enclose the Cystatin domain. Residues 73-77 (QVVAG) carry the Secondary area of contact motif. N-linked (GlcNAc...) asparagine glycosylation is present at Asn109.

Belongs to the cystatin family. Phytocystatin subfamily. In terms of processing, glycosylated.

It is found in the secreted. In terms of biological role, specific inhibitor of papain family cysteine proteinases. Inhibits papain, chymopapain, bromelain, ficin, human cathepsins B, H and L, actinidain and house dustmite endopeptidase 1, but does not inhibit human bleomycin hydrolase. Inhibits papain with an IC(50) of 2.47 nM. Does not inhibit cysteine proteinases belonging to other families including clostripain, streptopain and calpain. The sequence is that of Cysteine proteinase inhibitor 1 from Actinidia deliciosa (Kiwi).